Consider the following 323-residue polypeptide: Chitin-binding lectin 1 (323 aa).

An N-terminal signal peptide occupies residues 1–22 (MKETAISVLALLTLFLLEVVSA). Residues Pro-50, Pro-51, Pro-53, and Pro-55 each carry the 4-hydroxyproline modification. 4 O-linked (Ara...) hydroxyproline glycosylation sites follow: Pro-50, Pro-51, Pro-53, and Pro-55. Chitin-binding type-1 domains follow at residues 58–101 (YPQC…QCPG) and 105–149 (EGRC…QCKL). 8 disulfides stabilise this stretch: Cys-61–Cys-77, Cys-70–Cys-83, Cys-76–Cys-90, Cys-95–Cys-99, Cys-108–Cys-125, Cys-117–Cys-131, Cys-124–Cys-138, and Cys-143–Cys-147. Ser-78, Trp-80, Trp-82, and Tyr-89 together coordinate chitin. Residues 150–210 (PSPPPPPPPP…PPPPPPALPY (61 aa)) form an extensin-like region. Ser-151 carries an O-linked (Gal) serine glycan. 10 tandem repeats follow at residues 151–159 (SPPPPPPPP), 160–164 (SPPPP), 165–167 (SPP), 168–172 (SPPPP), 173–180 (SPPPPPPP), 181–185 (SPPPP), 186–190 (SPPPP), 191–192 (SP), 193–198 (SPPPPP), and 200–206 (SPPPPPP). The interval 151 to 206 (SPPPPPPPPSPPPPSPPSPPPPSPPPPPPPSPPPPSPPPPSPSPPPPPASPPPPPP) is 10 X approximate repeats of S-P-P-P-P. 4-hydroxyproline is present on residues Pro-152, Pro-153, Pro-154, Pro-155, Pro-156, Pro-157, Pro-158, and Pro-159. O-linked (Ara...) hydroxyproline glycans are attached at residues Pro-152, Pro-153, Pro-154, Pro-155, Pro-156, Pro-157, Pro-158, and Pro-159. The tract at residues 154–203 (PPPPPPSPPPPSPPSPPPPSPPPPPPPSPPPPSPPPPSPSPPPPPASPPP) is disordered. Ser-160 is a glycosylation site (O-linked (Gal) serine). Pro-161, Pro-162, Pro-163, and Pro-164 each carry 4-hydroxyproline. 4 O-linked (Ara...) hydroxyproline glycosylation sites follow: Pro-161, Pro-162, Pro-163, and Pro-164. An O-linked (Gal) serine glycan is attached at Ser-165. A 4-hydroxyproline mark is found at Pro-166 and Pro-167. O-linked (Ara...) hydroxyproline glycosylation is found at Pro-166 and Pro-167. Ser-168 carries O-linked (Gal) serine glycosylation. Pro-169, Pro-170, Pro-171, and Pro-172 each carry 4-hydroxyproline. O-linked (Ara...) hydroxyproline glycosylation is found at Pro-169, Pro-170, Pro-171, and Pro-172. A glycan (O-linked (Gal) serine) is linked at Ser-173. A 4-hydroxyproline mark is found at Pro-174, Pro-175, Pro-176, Pro-177, Pro-178, Pro-179, and Pro-180. O-linked (Ara...) hydroxyproline glycans are attached at residues Pro-174, Pro-175, Pro-176, Pro-177, Pro-178, Pro-179, and Pro-180. O-linked (Gal) serine glycosylation occurs at Ser-181. A 4-hydroxyproline mark is found at Pro-182, Pro-183, Pro-184, and Pro-185. O-linked (Ara...) hydroxyproline glycans are attached at residues Pro-182, Pro-183, Pro-184, and Pro-185. Residue Ser-186 is glycosylated (O-linked (Gal) serine). 4-hydroxyproline occurs at positions 187, 188, 189, and 190. 4 O-linked (Ara...) hydroxyproline glycosylation sites follow: Pro-187, Pro-188, Pro-189, and Pro-190. Ser-191 carries O-linked (Gal) serine glycosylation. Pro-192 is subject to 4-hydroxyproline. O-linked (Ara...) hydroxyproline glycosylation occurs at Pro-192. A glycan (O-linked (Gal) serine) is linked at Ser-193. 4-hydroxyproline is present on residues Pro-194, Pro-195, Pro-196, Pro-197, and Pro-198. O-linked (Ara...) hydroxyproline glycosylation is found at Pro-194, Pro-195, Pro-196, Pro-197, and Pro-198. Ser-200 is a glycosylation site (O-linked (Gal) serine). Residues Pro-201, Pro-202, Pro-203, Pro-204, Pro-205, Pro-206, and Pro-209 each carry the 4-hydroxyproline modification. Pro-201, Pro-202, Pro-203, Pro-204, Pro-205, Pro-206, and Pro-209 each carry an O-linked (Ara...) hydroxyproline glycan. Chitin-binding type-1 domains lie at 210–253 (YPQC…QCPG) and 257–301 (EGRC…QCNT). 8 disulfides stabilise this stretch: Cys-213/Cys-229, Cys-222/Cys-235, Cys-228/Cys-242, Cys-247/Cys-251, Cys-260/Cys-277, Cys-269/Cys-283, Cys-276/Cys-290, and Cys-295/Cys-299. Residues Ser-230, Trp-232, Trp-234, and Tyr-241 each contribute to the chitin site.

In the central section; belongs to the extensin family. In terms of assembly, homodimer. Heavily glycosylated with beta-arabinose on hydroxyprolines and with alpha-galactose on serines of the extensin-like domain. As no other sugars could be detected in the native lectin, it is unlikely that the three putative N-glycosylation sites are actually glycosylated. Post-translationally, the N-terminus is blocked. The N-terminal sequences proposed in PubMed:9022287 and PubMed:11056399 originate probably from truncated proteins.

Functionally, this protein might function as a defense against chitin containing pathogens. Binds to several branched or linear N-acetyllactosamine-containing glycosphingolipids and also to lactosylceramide with sphingosine and non-hydroxy fatty acids. The protein is Chitin-binding lectin 1 of Solanum tuberosum (Potato).